The primary structure comprises 628 residues: Patulin synthase (628 aa).

The first 20 residues, 1–20, serve as a signal peptide directing secretion; it reads MRPIPSILGALGAFATLSAA. An N-linked (GlcNAc...) asparagine glycan is attached at asparagine 48. Residues 60-61 and 81-82 contribute to the FAD site; these read TA and EA. N-linked (GlcNAc...) asparagine glycosylation is present at asparagine 92. 147-150 contributes to the FAD binding site; the sequence is NYMA. N-linked (GlcNAc...) asparagine glycans are attached at residues asparagine 197, asparagine 260, asparagine 386, asparagine 429, and asparagine 486. The active-site Proton acceptor is the histidine 564. Residues alanine 598 and 609–610 contribute to the FAD site; that span reads PQ.

This sequence belongs to the GMC oxidoreductase family. In terms of assembly, homodimer. FAD is required as a cofactor.

It localises to the cytoplasm. The protein resides in the cell cortex. The protein localises to the vacuole. Its subcellular location is the secreted. It is found in the cell wall. The catalysed reaction is (E)-ascladiol + A = patulin + AH2. Its pathway is mycotoxin biosynthesis; patulin biosynthesis. Functionally, patulin synthase; part of the gene cluster that mediates the biosynthesis of patulin, an acetate-derived tetraketide mycotoxin produced by several fungal species that shows antimicrobial properties against several bacteria. PatE catalyzes the last step of the pathway which is the conversion of E-ascladiol to patulin. The pathway begins with the synthesis of 6-methylsalicylic acid by the polyketide synthase (PKS) patK via condensation of acetate and malonate units. The 6-methylsalicylic acid decarboxylase patG then catalyzes the decarboxylation of 6-methylsalicylic acid to yield m-cresol (also known as 3-methylphenol). These first reactions occur in the cytosol. The intermediate m-cresol is then transported into the endoplasmic reticulum where the cytochrome P450 monooxygenase patH converts it to m-hydroxybenzyl alcohol, which is further converted to gentisyl alcohol by the cytochrome P450 monooxygenase patI. The oxidoreductases patJ and patO further convert gentisyl alcohol to isoepoxydon in the vacuole. PatN catalyzes then the transformation of isoepoxydon into phyllostine. The cluster protein patF is responsible for the conversion from phyllostine to neopatulin whereas the alcohol dehydrogenase patD converts neopatulin to E-ascladiol. The steps between isoepoxydon and E-ascladiol occur in the cytosol, and E-ascladiol is probably secreted to the extracellular space by one of the cluster-specific transporters patC or patM. Finally, the secreted patulin synthase patE catalyzes the conversion of E-ascladiol to patulin. The protein is Patulin synthase of Aspergillus clavatus (strain ATCC 1007 / CBS 513.65 / DSM 816 / NCTC 3887 / NRRL 1 / QM 1276 / 107).